The following is a 321-amino-acid chain: D-alanine--D-alanine ligase (321 aa).

An ATP-grasp domain is found at 103-303 (KKILTPENIP…YVALCRMIVE (201 aa)). ATP is bound at residue 129-186 (PLPRPYVLKPVNEGSSVGVAIIDESFNDGQPIRKDQIDPWKNFKTLLAEPFIKGRELT). Mg(2+) contacts are provided by Asp254, Glu270, and Asn272.

The protein belongs to the D-alanine--D-alanine ligase family. Requires Mg(2+) as cofactor. Mn(2+) serves as cofactor.

It is found in the cytoplasm. The enzyme catalyses 2 D-alanine + ATP = D-alanyl-D-alanine + ADP + phosphate + H(+). The protein operates within cell wall biogenesis; peptidoglycan biosynthesis. In terms of biological role, cell wall formation. The polypeptide is D-alanine--D-alanine ligase (Zymomonas mobilis subsp. mobilis (strain ATCC 31821 / ZM4 / CP4)).